The sequence spans 313 residues: Short-chain dehydrogenase/reductase family 9C member 7 (313 aa).

NADP(+) is bound at residue 29–53 (FITGCDSGFGNLLAKQLVDRGMQVL). Serine 160 is a substrate binding site. Tyrosine 172 serves as the catalytic Proton acceptor. Serine 185 is modified (phosphoserine).

It belongs to the short-chain dehydrogenases/reductases (SDR) family. As to expression, expressed in the skin. Expressed in granular and cornified layers of the epidermis (at protein level). Highly expressed in liver.

It localises to the cytoplasm. It catalyses the reaction a N-[omega-(9R,10R)-epoxy-(13R)-hydroxy-(11E)-octadecenoyloxy]acyl-beta-D-glucosyl-(1&lt;-&gt;1)-sphing-4E-enine + NAD(+) = a N-[omega-(9R,10R)-epoxy-13-oxo-(11E)-octadecenoyloxy]acyl-beta-D-glucosyl-(1&lt;-&gt;1)-sphing-4E-enine + NADH + H(+). It carries out the reaction a N-[omega-(9R,10R)-epoxy-(13R)-hydroxy-(11E)-octadecenoyloxy]-acylsphing-4E-enine + NAD(+) = a N-[omega-(9R,10R)-epoxy-13-oxo-(11E)-octadecenoyloxy]-acylsphing-4E-enine + NADH + H(+). Its function is as follows. Plays a crucial role in the formation of the epidermal permeability barrier. Catalyzes the NAD+-dependent dehydrogenation of the linoleate 9,10-trans-epoxy-11E-13-alcohol esterified in omega-O-acylceramides (such as in N-[omega-(9R,10R)-epoxy-(13R)-hydroxy-(11E)-octadecenoyloxy]-acylsphing-4E-enine) to the corresponding 13-ketone, the reactive moiety required for binding of epidermal ceramides to proteins. Displays weak conversion of all-trans-retinal to all-trans-retinol in the presence of NADH. Has apparently no steroid dehydrogenase activity. The sequence is that of Short-chain dehydrogenase/reductase family 9C member 7 (SDR9C7) from Homo sapiens (Human).